Consider the following 353-residue polypeptide: MSHILDTINTVYPFPPKPIPLRDEEKQAYIAEIKQLLIEKDAVLIAHYYTDPEIQALAESTGGFVGDSLEMAKFGNRYPATTLIIAGVRFMGESAKILTPEKRILMPTLEAECSLDLGCPADKFTEFCDAHPDHTVVVYANTSAAVKARADWVVTSSIALEIVEHLDSEGKPIIWGPDRHLGAYIAKKTGADMLLWQGECVVHDEFSADALRKMKALYPDAAILVHPESPASVVELADAVGSTSQLIKAAKTLPQQKMIVATDKGIFFKMQQMVPEKELIEAPTAGAGATCRSCAHCPWMAMNGLQAIAQALREGGKQHEIFVDEALRVKSLIPLNRMLDFAEQLNLKVKGNA.

Iminosuccinate-binding residues include H47 and S68. Residue C113 coordinates [4Fe-4S] cluster. Iminosuccinate contacts are provided by residues 139-141 (YAN) and S156. Residue C200 coordinates [4Fe-4S] cluster. Iminosuccinate contacts are provided by residues 226–228 (HPE) and T243. [4Fe-4S] cluster is bound at residue C297.

Belongs to the quinolinate synthase family. Type 1 subfamily. Requires [4Fe-4S] cluster as cofactor.

The protein resides in the cytoplasm. It carries out the reaction iminosuccinate + dihydroxyacetone phosphate = quinolinate + phosphate + 2 H2O + H(+). Its pathway is cofactor biosynthesis; NAD(+) biosynthesis; quinolinate from iminoaspartate: step 1/1. In terms of biological role, catalyzes the condensation of iminoaspartate with dihydroxyacetone phosphate to form quinolinate. This Vibrio cholerae serotype O1 (strain ATCC 39541 / Classical Ogawa 395 / O395) protein is Quinolinate synthase.